Here is a 923-residue protein sequence, read N- to C-terminus: Periplasmic nitrate reductase (923 aa).

The segment at residues 1–30 (MNRRDFIKNTAIASAASVAGLSVPSSMLGA) is a signal peptide (tat-type signal). Positions 34–90 (WKWDKAVCRFCGTGCGIMIARKDGKIVATKGDPAAPVNRGLNCIKGYFNAKIMYGED) constitute a 4Fe-4S Mo/W bis-MGD-type domain. The [4Fe-4S] cluster site is built by C41, C44, C48, and C76. Residues K78, Q146, N171, C175, 208 to 215 (WGANMAEM), M416, Q420, N526, 551 to 552 (SD), K574, D601, and 813 to 822 (TGRVLEHWHS) contribute to the Mo-bis(molybdopterin guanine dinucleotide) site. Position 889 (W889) interacts with substrate. Positions 897 and 914 each coordinate Mo-bis(molybdopterin guanine dinucleotide).

Belongs to the prokaryotic molybdopterin-containing oxidoreductase family. NasA/NapA/NarB subfamily. As to quaternary structure, component of the periplasmic nitrate reductase NapAB complex composed of NapA and NapB. [4Fe-4S] cluster is required as a cofactor. The cofactor is Mo-bis(molybdopterin guanine dinucleotide). Predicted to be exported by the Tat system. The position of the signal peptide cleavage has not been experimentally proven.

The protein localises to the periplasm. The enzyme catalyses 2 Fe(II)-[cytochrome] + nitrate + 2 H(+) = 2 Fe(III)-[cytochrome] + nitrite + H2O. Its function is as follows. Catalytic subunit of the periplasmic nitrate reductase complex NapAB. Receives electrons from NapB and catalyzes the reduction of nitrate to nitrite. The polypeptide is Periplasmic nitrate reductase (Campylobacter jejuni subsp. jejuni serotype O:23/36 (strain 81-176)).